The following is a 378-amino-acid chain: Ribosomal RNA large subunit methyltransferase G (378 aa).

The protein belongs to the methyltransferase superfamily. RlmG family.

It localises to the cytoplasm. It carries out the reaction guanosine(1835) in 23S rRNA + S-adenosyl-L-methionine = N(2)-methylguanosine(1835) in 23S rRNA + S-adenosyl-L-homocysteine + H(+). Specifically methylates the guanine in position 1835 (m2G1835) of 23S rRNA. The protein is Ribosomal RNA large subunit methyltransferase G of Escherichia coli O157:H7.